We begin with the raw amino-acid sequence, 1360 residues long: DNA-directed RNA polymerase subunit beta (1360 aa).

It belongs to the RNA polymerase beta chain family. The RNAP catalytic core consists of 2 alpha, 1 beta, 1 beta' and 1 omega subunit. When a sigma factor is associated with the core the holoenzyme is formed, which can initiate transcription.

The catalysed reaction is RNA(n) + a ribonucleoside 5'-triphosphate = RNA(n+1) + diphosphate. In terms of biological role, DNA-dependent RNA polymerase catalyzes the transcription of DNA into RNA using the four ribonucleoside triphosphates as substrates. The sequence is that of DNA-directed RNA polymerase subunit beta from Magnetococcus marinus (strain ATCC BAA-1437 / JCM 17883 / MC-1).